Here is a 466-residue protein sequence, read N- to C-terminus: Phosphomethylpyrimidine synthase (466 aa).

Substrate contacts are provided by residues Asn80, Met109, Tyr139, His175, 195–197, 236–239, and Glu275; these read SRG and DSLR. His279 lines the Zn(2+) pocket. Tyr302 lines the substrate pocket. His343 lines the Zn(2+) pocket. Residues Cys423, Cys426, and Cys431 each coordinate [4Fe-4S] cluster.

This sequence belongs to the ThiC family. [4Fe-4S] cluster serves as cofactor.

The enzyme catalyses 5-amino-1-(5-phospho-beta-D-ribosyl)imidazole + S-adenosyl-L-methionine = 4-amino-2-methyl-5-(phosphooxymethyl)pyrimidine + CO + 5'-deoxyadenosine + formate + L-methionine + 3 H(+). The protein operates within cofactor biosynthesis; thiamine diphosphate biosynthesis. Catalyzes the synthesis of the hydroxymethylpyrimidine phosphate (HMP-P) moiety of thiamine from aminoimidazole ribotide (AIR) in a radical S-adenosyl-L-methionine (SAM)-dependent reaction. In Prochlorococcus marinus (strain NATL1A), this protein is Phosphomethylpyrimidine synthase.